The chain runs to 184 residues: Phosphorelay intermediate protein YPD1 (184 aa).

Positions 30–125 (EEGFSKSLVE…SAENVAVNDG (96 aa)) constitute an HPt domain. The residue at position 69 (His-69) is a Phosphohistidine. The segment at 120–152 (VAVNDGETNPENGSNGNETSNNKTNTSNIPDES) is disordered. Residues 125–147 (GETNPENGSNGNETSNNKTNTSN) show a composition bias toward low complexity.

The protein belongs to the YPD1 family.

Its subcellular location is the cytoplasm. It localises to the nucleus. Phosphorelay intermediate protein that is part of the bifurcated SLN1-YPD1-SKN7/SSK1 two-component regulatory system, which controls activity of the HOG1 pathway and gene expression in response to oxidative stress and probably to changes in the osmolarity of the extracellular environment. Catalyzes the phosphoryl group transfer from the membrane-bound histidine kinase SLN1 to two distinct response regulators SSK1 and SKN7. This chain is Phosphorelay intermediate protein YPD1 (YPD1), found in Candida albicans (strain SC5314 / ATCC MYA-2876) (Yeast).